The sequence spans 306 residues: Curved DNA-binding protein (306 aa).

Residues 5–69 (DYYAIMGVKP…QRRAEYDQMW (65 aa)) form the J domain.

The protein resides in the cytoplasm. It is found in the nucleoid. DNA-binding protein that preferentially recognizes a curved DNA sequence. It is probably a functional analog of DnaJ; displays overlapping activities with DnaJ, but functions under different conditions, probably acting as a molecular chaperone in an adaptive response to environmental stresses other than heat shock. Lacks autonomous chaperone activity; binds native substrates and targets them for recognition by DnaK. Its activity is inhibited by the binding of CbpM. The sequence is that of Curved DNA-binding protein from Escherichia coli (strain 55989 / EAEC).